Here is a 202-residue protein sequence, read N- to C-terminus: Large ribosomal subunit protein uL13 (202 aa).

This sequence belongs to the universal ribosomal protein uL13 family. As to quaternary structure, component of the large ribosomal subunit (LSU). Mature N.crassa ribosomes consist of a small (40S) and a large (60S) subunit. The 40S small subunit contains 1 molecule of ribosomal RNA (18S rRNA) and at least 32 different proteins. The large 60S subunit contains 3 rRNA molecules (26S, 5.8S and 5S rRNA) and at least 42 different proteins.

It localises to the cytoplasm. In terms of biological role, component of the ribosome, a large ribonucleoprotein complex responsible for the synthesis of proteins in the cell. The small ribosomal subunit (SSU) binds messenger RNAs (mRNAs) and translates the encoded message by selecting cognate aminoacyl-transfer RNA (tRNA) molecules. The large subunit (LSU) contains the ribosomal catalytic site termed the peptidyl transferase center (PTC), which catalyzes the formation of peptide bonds, thereby polymerizing the amino acids delivered by tRNAs into a polypeptide chain. The nascent polypeptides leave the ribosome through a tunnel in the LSU and interact with protein factors that function in enzymatic processing, targeting, and the membrane insertion of nascent chains at the exit of the ribosomal tunnel. The chain is Large ribosomal subunit protein uL13 (crp-46) from Neurospora crassa (strain ATCC 24698 / 74-OR23-1A / CBS 708.71 / DSM 1257 / FGSC 987).